The chain runs to 345 residues: N-acetyl-gamma-glutamyl-phosphate reductase (345 aa).

The active site involves cysteine 149.

Belongs to the NAGSA dehydrogenase family. Type 1 subfamily.

The protein localises to the cytoplasm. The enzyme catalyses N-acetyl-L-glutamate 5-semialdehyde + phosphate + NADP(+) = N-acetyl-L-glutamyl 5-phosphate + NADPH + H(+). The protein operates within amino-acid biosynthesis; L-arginine biosynthesis; N(2)-acetyl-L-ornithine from L-glutamate: step 3/4. In terms of biological role, catalyzes the NADPH-dependent reduction of N-acetyl-5-glutamyl phosphate to yield N-acetyl-L-glutamate 5-semialdehyde. The chain is N-acetyl-gamma-glutamyl-phosphate reductase from Herminiimonas arsenicoxydans.